The following is a 143-amino-acid chain: Small ribosomal subunit protein uS12 (143 aa).

Residues 1 to 20 are compositionally biased toward basic residues; the sequence is MGKCRGLRTARKLRSHRRDQ. Residues 1 to 26 form a disordered region; sequence MGKCRGLRTARKLRSHRRDQKWHDKQ. Residue K37 forms a Glycyl lysine isopeptide (Lys-Gly) (interchain with G-Cter in SUMO2) linkage. K54 bears the N6-succinyllysine mark. P62 bears the 3-hydroxyproline mark. K135 is subject to N6-acetyllysine.

This sequence belongs to the universal ribosomal protein uS12 family. Component of the 40S small ribosomal subunit. Part of the small subunit (SSU) processome, composed of more than 70 proteins and the RNA chaperone small nucleolar RNA (snoRNA) U3. Hydroxylation at Pro-62 affects translation termination efficiency.

Its subcellular location is the cytoplasm. The protein localises to the cytosol. The protein resides in the rough endoplasmic reticulum. It is found in the nucleus. It localises to the nucleolus. Component of the ribosome, a large ribonucleoprotein complex responsible for the synthesis of proteins in the cell. The small ribosomal subunit (SSU) binds messenger RNAs (mRNAs) and translates the encoded message by selecting cognate aminoacyl-transfer RNA (tRNA) molecules. The large subunit (LSU) contains the ribosomal catalytic site termed the peptidyl transferase center (PTC), which catalyzes the formation of peptide bonds, thereby polymerizing the amino acids delivered by tRNAs into a polypeptide chain. The nascent polypeptides leave the ribosome through a tunnel in the LSU and interact with protein factors that function in enzymatic processing, targeting, and the membrane insertion of nascent chains at the exit of the ribosomal tunnel. Plays an important role in translational accuracy. Part of the small subunit (SSU) processome, first precursor of the small eukaryotic ribosomal subunit. During the assembly of the SSU processome in the nucleolus, many ribosome biogenesis factors, an RNA chaperone and ribosomal proteins associate with the nascent pre-rRNA and work in concert to generate RNA folding, modifications, rearrangements and cleavage as well as targeted degradation of pre-ribosomal RNA by the RNA exosome. This is Small ribosomal subunit protein uS12 (RPS23) from Bos taurus (Bovine).